A 274-amino-acid polypeptide reads, in one-letter code: MTQQLQNIIDTAWENRASLSPSAAPREVQDAVEHVIAELDAGKLRVATREGVGQWTVHQWIKKAVLLSFRLKDNELIEAGSLGFYDKVPTKFAGRSAAEMAATGVRVVPPAVARRGSFIAKGAILMPSYVNIGAYVDEGTMVDTWATVGSCAQVGKHVHLSGGVGLGGVLEPLQANPTIIEDNCFIGARSEIVEGVIVEENSVISMGVYIGQSTPIYDRATDTVSYGRVPAGSVVVSGSLPKGDGKYSMYAAIIVKKVDAKTRSTTSLNDLLRD.

R106 and D143 together coordinate substrate.

This sequence belongs to the transferase hexapeptide repeat family. As to quaternary structure, homotrimer.

The protein localises to the cytoplasm. It carries out the reaction (S)-2,3,4,5-tetrahydrodipicolinate + succinyl-CoA + H2O = (S)-2-succinylamino-6-oxoheptanedioate + CoA. It functions in the pathway amino-acid biosynthesis; L-lysine biosynthesis via DAP pathway; LL-2,6-diaminopimelate from (S)-tetrahydrodipicolinate (succinylase route): step 1/3. This is 2,3,4,5-tetrahydropyridine-2,6-dicarboxylate N-succinyltransferase from Paracidovorax citrulli (strain AAC00-1) (Acidovorax citrulli).